The following is a 177-amino-acid chain: Adenine phosphoribosyltransferase (177 aa).

This sequence belongs to the purine/pyrimidine phosphoribosyltransferase family. Homodimer.

Its subcellular location is the cytoplasm. It carries out the reaction AMP + diphosphate = 5-phospho-alpha-D-ribose 1-diphosphate + adenine. Its pathway is purine metabolism; AMP biosynthesis via salvage pathway; AMP from adenine: step 1/1. Catalyzes a salvage reaction resulting in the formation of AMP, that is energically less costly than de novo synthesis. This chain is Adenine phosphoribosyltransferase, found in Leptospira biflexa serovar Patoc (strain Patoc 1 / Ames).